The sequence spans 143 residues: Transcriptional regulator MraZ (143 aa).

SpoVT-AbrB domains are found at residues 5–47 and 76–119; these read EYQH…PQDE and AAEL…STEK.

This sequence belongs to the MraZ family. As to quaternary structure, forms oligomers.

It localises to the cytoplasm. The protein localises to the nucleoid. The polypeptide is Transcriptional regulator MraZ (Syntrophomonas wolfei subsp. wolfei (strain DSM 2245B / Goettingen)).